Reading from the N-terminus, the 202-residue chain is ATP-dependent Clp protease proteolytic subunit (202 aa).

Ser-101 acts as the Nucleophile in catalysis. The active site involves His-126.

The protein belongs to the peptidase S14 family. Component of the chloroplastic Clp protease core complex.

It is found in the plastid. Its subcellular location is the chloroplast stroma. It carries out the reaction Hydrolysis of proteins to small peptides in the presence of ATP and magnesium. alpha-casein is the usual test substrate. In the absence of ATP, only oligopeptides shorter than five residues are hydrolyzed (such as succinyl-Leu-Tyr-|-NHMec, and Leu-Tyr-Leu-|-Tyr-Trp, in which cleavage of the -Tyr-|-Leu- and -Tyr-|-Trp bonds also occurs).. In terms of biological role, cleaves peptides in various proteins in a process that requires ATP hydrolysis. Has a chymotrypsin-like activity. Plays a major role in the degradation of misfolded proteins. The chain is ATP-dependent Clp protease proteolytic subunit from Drimys granadensis.